We begin with the raw amino-acid sequence, 136 residues long: Glutamate mutase sigma subunit (136 aa).

One can recognise a B12-binding domain in the interval 3 to 136 (KKKIVIGVIG…IIDLKKDFKI (134 aa)). Residues 13-17 (SDCHT), histidine 16, and 61-63 (SSI) contribute to the adenosylcob(III)alamin site.

This sequence belongs to the methylaspartate mutase GlmS subunit family. Heterotetramer composed of 2 epsilon subunits (GlmE) and 2 sigma subunits (GlmS). GlmE exists as a homodimer and GlmS as a monomer. Requires adenosylcob(III)alamin as cofactor.

The enzyme catalyses (2S,3S)-3-methyl-L-aspartate = L-glutamate. It participates in amino-acid degradation; L-glutamate degradation via mesaconate pathway; acetate and pyruvate from L-glutamate: step 1/4. In terms of biological role, catalyzes the carbon skeleton rearrangement of L-glutamate to L-threo-3-methylaspartate ((2S,3S)-3-methylaspartate). The protein is Glutamate mutase sigma subunit of Fusobacterium nucleatum subsp. nucleatum (strain ATCC 25586 / DSM 15643 / BCRC 10681 / CIP 101130 / JCM 8532 / KCTC 2640 / LMG 13131 / VPI 4355).